The sequence spans 329 residues: Biotin synthase (329 aa).

The region spanning 46–275 (FFGRRLKLVR…LNPKAELRAS (230 aa)) is the Radical SAM core domain. 3 residues coordinate [4Fe-4S] cluster: cysteine 64, cysteine 68, and cysteine 71. [2Fe-2S] cluster contacts are provided by cysteine 108, cysteine 140, cysteine 200, and arginine 273.

It belongs to the radical SAM superfamily. Biotin synthase family. Homodimer. [4Fe-4S] cluster is required as a cofactor. Requires [2Fe-2S] cluster as cofactor.

The catalysed reaction is (4R,5S)-dethiobiotin + (sulfur carrier)-SH + 2 reduced [2Fe-2S]-[ferredoxin] + 2 S-adenosyl-L-methionine = (sulfur carrier)-H + biotin + 2 5'-deoxyadenosine + 2 L-methionine + 2 oxidized [2Fe-2S]-[ferredoxin]. It participates in cofactor biosynthesis; biotin biosynthesis; biotin from 7,8-diaminononanoate: step 2/2. Functionally, catalyzes the conversion of dethiobiotin (DTB) to biotin by the insertion of a sulfur atom into dethiobiotin via a radical-based mechanism. This Thermus thermophilus (strain ATCC 27634 / DSM 579 / HB8) protein is Biotin synthase.